A 344-amino-acid chain; its full sequence is Anthranilate phosphoribosyltransferase (344 aa).

5-phospho-alpha-D-ribose 1-diphosphate is bound by residues Gly-80, Gly-83 to Asp-84, Thr-88, Asn-90 to Thr-93, Lys-108 to Ser-116, and Ser-120. Gly-80 is an anthranilate binding site. Residue Ser-92 coordinates Mg(2+). An anthranilate-binding site is contributed by Asn-111. Residue Arg-166 coordinates anthranilate. Mg(2+)-binding residues include Asp-225 and Glu-226.

The protein belongs to the anthranilate phosphoribosyltransferase family. Homodimer. Mg(2+) serves as cofactor.

The enzyme catalyses N-(5-phospho-beta-D-ribosyl)anthranilate + diphosphate = 5-phospho-alpha-D-ribose 1-diphosphate + anthranilate. It participates in amino-acid biosynthesis; L-tryptophan biosynthesis; L-tryptophan from chorismate: step 2/5. Functionally, catalyzes the transfer of the phosphoribosyl group of 5-phosphorylribose-1-pyrophosphate (PRPP) to anthranilate to yield N-(5'-phosphoribosyl)-anthranilate (PRA). The polypeptide is Anthranilate phosphoribosyltransferase (Legionella pneumophila (strain Corby)).